The sequence spans 470 residues: Cyclic AMP-responsive element-binding protein 3-like protein 3 (470 aa).

Over 1-319 the chain is Cytoplasmic; sequence MDGDISTGKM…TSKPAHAGTC (319 aa). Positions 59–145 are disordered; sequence SDSDEFLNSI…PEPPRTQVHE (87 aa). The bZIP domain occupies 239–302; sequence VLKKIRRKIR…LSLLEQLKHL (64 aa). Residues 241–270 are basic motif; sequence KKIRRKIRNKQSAQESRKKKKEYIDGLENR. Residues 281–302 are leucine-zipper; the sequence is LQRKVLHLEKQNLSLLEQLKHL. A Glycyl lysine isopeptide (Lys-Gly) (interchain with G-Cter in ubiquitin) cross-link involves residue Lys-290. The helical; Signal-anchor for type II membrane protein transmembrane segment at 320 to 340 threads the bilayer; it reads IAVLLLSFVLIILPSISPFTA. The Lumenal segment spans residues 341–470; it reads NKVDSPGDFI…RVVQDALGVL (130 aa). Asn-410 and Asn-417 each carry an N-linked (GlcNAc...) asparagine glycan.

Belongs to the bZIP family. ATF subfamily. In terms of assembly, binds DNA as a dimer. May form homodimers. Interacts with ATF6. Interacts with SYNV1/HRD1; this interaction leads to CREB3L3 ubiquitination and proteasomal degradation. Post-translationally, controlled by regulated intramembrane proteolysis (RIP). Following ER stress a fragment containing the cytoplasmic transcription factor domain is released by proteolysis. The cleavage seems to be performed sequentially by site-1 and site-2 proteases (PS1 and PS2). In terms of processing, N-glycosylation is required for optimal proteolytic activation. Ubiquitinated at Lys-290 by SYNV1/HRD1 via 'Lys-27'-linked ubiquitin.

The protein localises to the endoplasmic reticulum membrane. The protein resides in the nucleus. In terms of biological role, transcription factor that may act during endoplasmic reticulum stress by activating unfolded protein response target genes. Activated in response to cAMP stimulation. Binds the cAMP response element (CRE). Activates transcription through box-B element and CRE. Seems to function synergistically with ATF6. In acute inflammatory response, may activate expression of acute phase response (APR) genes. May be involved in growth suppression. Regulates FGF21 transcription. Plays a crucial role in the regulation of triglyceride metabolism and is required for the maintenance of normal plasma triglyceride concentrations. The chain is Cyclic AMP-responsive element-binding protein 3-like protein 3 (Creb3l3) from Rattus norvegicus (Rat).